A 520-amino-acid polypeptide reads, in one-letter code: GMP synthase [glutamine-hydrolyzing] (520 aa).

The Glutamine amidotransferase type-1 domain occupies Ser9–Asp202. The Nucleophile role is filled by Cys86. Catalysis depends on residues His176 and Glu178. The GMPS ATP-PPase domain maps to Trp203–Arg395. Ser230–Ser236 contributes to the ATP binding site.

In terms of assembly, homodimer.

The catalysed reaction is XMP + L-glutamine + ATP + H2O = GMP + L-glutamate + AMP + diphosphate + 2 H(+). It participates in purine metabolism; GMP biosynthesis; GMP from XMP (L-Gln route): step 1/1. Catalyzes the synthesis of GMP from XMP. The chain is GMP synthase [glutamine-hydrolyzing] from Allorhizobium ampelinum (strain ATCC BAA-846 / DSM 112012 / S4) (Agrobacterium vitis (strain S4)).